Here is a 188-residue protein sequence, read N- to C-terminus: MGLKADSWIKKMSLEHGMISPFCEKQIGKDVISYGLSSYGYDIRVGSEFMLFDNKNALIDPKNFDPNNTTKIDASKEGFFILPANAFALAHTIEYFKMPKDTLAICLGKSTYARCGIIVNVTPFEPEFEGYITIEISNTTNLPAKVYANEGIAQVVFLQGDEVCEQSYKDRGGKYQGQVGITLPKILK.

109-114 (KSTYAR) contacts dCTP. The active-site Proton donor/acceptor is the E135. 3 residues coordinate dCTP: Q154, Y168, and Q178.

This sequence belongs to the dCTP deaminase family. As to quaternary structure, homotrimer.

The catalysed reaction is dCTP + H2O + H(+) = dUTP + NH4(+). It participates in pyrimidine metabolism; dUMP biosynthesis; dUMP from dCTP (dUTP route): step 1/2. Functionally, catalyzes the deamination of dCTP to dUTP. The sequence is that of dCTP deaminase from Helicobacter pylori (strain Shi470).